The sequence spans 177 residues: Dual-action ribosomal maturation protein DarP (177 aa).

Residues 1 to 26 (MKIVGDSEHFKQPYDSDEEYVSKTED) form a disordered region.

Belongs to the DarP family.

It is found in the cytoplasm. Functionally, member of a network of 50S ribosomal subunit biogenesis factors which assembles along the 30S-50S interface, preventing incorrect 23S rRNA structures from forming. Promotes peptidyl transferase center (PTC) maturation. The polypeptide is Dual-action ribosomal maturation protein DarP (Shewanella sp. (strain ANA-3)).